The following is a 483-amino-acid chain: NADH-quinone oxidoreductase subunit N (483 aa).

Helical transmembrane passes span 13 to 33 (PALPEILLAVGAMALLMYGVF), 45 to 65 (GALALFALVGAFLIIEPNAYV), 80 to 100 (FMKLLILLAAAAAIVMSLTFI), 111 to 131 (PVLIILATLGMFMMVSANGLI), 165 to 185 (FVLGALASGMLLYGASLIYGF), 205 to 225 (IGVIFGIVFVLAGLAFKISAV), 244 to 264 (AFFAGAPKVAAMALILRVLFV), 276 to 296 (IIVFIAIASMVLGAFAAIGQS), 301 to 321 (LMAYSSISHMGFAMVGLAAGT), 328 to 348 (VLIYLVIYVVMNAGVFCCILA), 373 to 393 (AFMMAMLMFSLAGVPPLAGFF), 407 to 429 (LYPLAVIGVLASVVGAFYYLRIV), and 452 to 472 (VLGISGVFTLFFFVYPAPLIL).

This sequence belongs to the complex I subunit 2 family. As to quaternary structure, NDH-1 is composed of 14 different subunits. Subunits NuoA, H, J, K, L, M, N constitute the membrane sector of the complex.

It localises to the cell inner membrane. The enzyme catalyses a quinone + NADH + 5 H(+)(in) = a quinol + NAD(+) + 4 H(+)(out). Functionally, NDH-1 shuttles electrons from NADH, via FMN and iron-sulfur (Fe-S) centers, to quinones in the respiratory chain. The immediate electron acceptor for the enzyme in this species is believed to be ubiquinone. Couples the redox reaction to proton translocation (for every two electrons transferred, four hydrogen ions are translocated across the cytoplasmic membrane), and thus conserves the redox energy in a proton gradient. In Parvibaculum lavamentivorans (strain DS-1 / DSM 13023 / NCIMB 13966), this protein is NADH-quinone oxidoreductase subunit N.